Consider the following 257-residue polypeptide: Phosphonates import ATP-binding protein PhnC (257 aa).

Positions 4–248 (IEFKNVSKVY…VFSEIYGRTI (245 aa)) constitute an ABC transporter domain. 37–44 (GLSGAGKS) provides a ligand contact to ATP.

The protein belongs to the ABC transporter superfamily. Phosphonates importer (TC 3.A.1.9.1) family. In terms of assembly, the complex is composed of two ATP-binding proteins (PhnC), two transmembrane proteins (PhnE) and a solute-binding protein (PhnD).

The protein resides in the cell membrane. It catalyses the reaction phosphonate(out) + ATP + H2O = phosphonate(in) + ADP + phosphate + H(+). Its function is as follows. Part of the ABC transporter complex PhnCDE involved in phosphonates import. Responsible for energy coupling to the transport system. The chain is Phosphonates import ATP-binding protein PhnC from Staphylococcus aureus (strain COL).